Here is a 261-residue protein sequence, read N- to C-terminus: uncharacterized protein (261 aa).

The signal sequence occupies residues 1 to 22; that stretch reads MRYLKKVTIYISLLILTIFIGG. A lipid anchor (N-palmitoyl cysteine) is attached at Cys23. Cys23 carries S-diacylglycerol cysteine lipidation.

This sequence belongs to the staphylococcal tandem lipoprotein family.

The protein localises to the cell membrane. This is an uncharacterized protein from Staphylococcus epidermidis (strain ATCC 35984 / DSM 28319 / BCRC 17069 / CCUG 31568 / BM 3577 / RP62A).